The following is a 251-amino-acid chain: BRI3-binding protein (251 aa).

A run of 4 helical transmembrane segments spans residues 13-33 (AGLL…PGAQ), 125-145 (ALLL…TLGF), 146-166 (TFSV…VVLF), and 185-205 (VLPL…GFYW). The stretch at 217–247 (NPSVEEKLEHLEKQVRLLNIRLNRVLESLDR) forms a coiled coil. N6-acetyllysine is present on Lys229. Ser248 is subject to Phosphoserine.

Interacts with LETMD1. Interacts with BRI3 (isoforms 1 and 2); the interaction with isoform 2 is weaker than with isoform 1. Interacts with BRI3; the interaction is weak. Interacts with TMEM238L. As to expression, most abundantly expressed in brain, liver and kidney. Overexpressed in leukemia and lymphoma cell lines, as well as in various carcinomas.

The protein localises to the mitochondrion outer membrane. In terms of biological role, involved in tumorigenesis and may function by stabilizing p53/TP53. The sequence is that of BRI3-binding protein from Homo sapiens (Human).